Here is a 233-residue protein sequence, read N- to C-terminus: Antiholin-like protein LrgB (233 aa).

6 consecutive transmembrane segments (helical) span residues 5 to 25 (LGINTPYFGILVSLIPFVIAT), 33 to 53 (GFFLLAPLFVSMVAGIAFLKL), 63 to 83 (IGGDIINFFLEPATICFAIPL), 97 to 117 (IFGGIAVGTIIALLLIYLVAI), 152 to 172 (LTSLAVILNAVVISALGAKIV), and 212 to 232 (IAVVIVGVIVVAVVPILAPIL).

The protein belongs to the CidB/LrgB family. LrgB subfamily.

It is found in the cell membrane. In terms of biological role, inhibits the expression or activity of extracellular murein hydrolases by interacting, possibly with LrgA, with the holin-like proteins CidA and/or CidB. The LrgAB and CidAB proteins may affect the proton motive force of the membrane. May be involved in programmed cell death (PCD), possibly triggering PCD in response to antibiotics and environmental stresses. This is Antiholin-like protein LrgB from Staphylococcus epidermidis (strain ATCC 12228 / FDA PCI 1200).